Reading from the N-terminus, the 310-residue chain is Homoserine kinase (310 aa).

91–101 (PIGSGLGSSAC) contributes to the ATP binding site.

This sequence belongs to the GHMP kinase family. Homoserine kinase subfamily.

It localises to the cytoplasm. The enzyme catalyses L-homoserine + ATP = O-phospho-L-homoserine + ADP + H(+). Its pathway is amino-acid biosynthesis; L-threonine biosynthesis; L-threonine from L-aspartate: step 4/5. Catalyzes the ATP-dependent phosphorylation of L-homoserine to L-homoserine phosphate. This Escherichia coli O6:K15:H31 (strain 536 / UPEC) protein is Homoserine kinase.